We begin with the raw amino-acid sequence, 235 residues long: tRNA (guanine-N(1)-)-methyltransferase (235 aa).

S-adenosyl-L-methionine-binding positions include G114 and 134–139 (VGDYIL).

This sequence belongs to the RNA methyltransferase TrmD family. Homodimer.

The protein localises to the cytoplasm. It carries out the reaction guanosine(37) in tRNA + S-adenosyl-L-methionine = N(1)-methylguanosine(37) in tRNA + S-adenosyl-L-homocysteine + H(+). In terms of biological role, specifically methylates guanosine-37 in various tRNAs. This is tRNA (guanine-N(1)-)-methyltransferase from Chelativorans sp. (strain BNC1).